The following is a 174-amino-acid chain: MNNYQLTINEVIEIINRNTDINKLVAKKDNLYPTDLYDLDKQQLIAIILNSDFALSSIKRALLEVTVEELGEQDNDDDLDEIDSELYEDAEASDVPHETIVKVFEADKSIVTFNGEKLKHYVNVDVDNSSVDEVKKIAKEISEHDFNDEDIEEAELKTFKNHLPTIYSMKKENK.

The protein belongs to the phi29likevirus protein p56 family. In terms of assembly, homodimer. Interacts with the histone-like protein p6; this interaction optimizes the binding of protein p6 at the viral DNA ends, thus favoring the initiation of replication.

Involved in the replication of viral DNA. It is required at the very beginning of the virus amplification, conditions in which a low number of viral DNA molecules enter the host cell, possibly to recruit the limiting amount of initiation factors at the replication origins. Once the infection process is established and the other replication proteins reach optimal concentration, it becomes dispensable. Optimizes the binding of protein p6 at the viral DNA ends, thus favoring the initiation of replication. The chain is DNA replication protein 17 (17) from Bacillus subtilis (Bacteriophage PZA).